A 192-amino-acid chain; its full sequence is Peptide deformylase (192 aa).

2 residues coordinate Fe cation: cysteine 102 and histidine 145. Glutamate 146 is a catalytic residue. Histidine 149 lines the Fe cation pocket.

It belongs to the polypeptide deformylase family. The cofactor is Fe(2+).

The catalysed reaction is N-terminal N-formyl-L-methionyl-[peptide] + H2O = N-terminal L-methionyl-[peptide] + formate. In terms of biological role, removes the formyl group from the N-terminal Met of newly synthesized proteins. Requires at least a dipeptide for an efficient rate of reaction. N-terminal L-methionine is a prerequisite for activity but the enzyme has broad specificity at other positions. This chain is Peptide deformylase, found in Thermus thermophilus (strain ATCC BAA-163 / DSM 7039 / HB27).